Consider the following 361-residue polypeptide: Histidinol-phosphate aminotransferase (361 aa).

Lys-219 carries the N6-(pyridoxal phosphate)lysine modification.

It belongs to the class-II pyridoxal-phosphate-dependent aminotransferase family. Histidinol-phosphate aminotransferase subfamily. In terms of assembly, homodimer. The cofactor is pyridoxal 5'-phosphate.

The catalysed reaction is L-histidinol phosphate + 2-oxoglutarate = 3-(imidazol-4-yl)-2-oxopropyl phosphate + L-glutamate. Its pathway is amino-acid biosynthesis; L-histidine biosynthesis; L-histidine from 5-phospho-alpha-D-ribose 1-diphosphate: step 7/9. The protein is Histidinol-phosphate aminotransferase of Acinetobacter baylyi (strain ATCC 33305 / BD413 / ADP1).